The primary structure comprises 197 residues: Fucoxanthin-chlorophyll a-c binding protein F, chloroplastic (197 aa).

Residues Met-1–Met-31 constitute a chloroplast transit peptide. 3 consecutive transmembrane segments (helical) span residues Ile-73 to Ile-94, Ile-114 to Met-134, and Gly-174 to Pro-196.

The protein belongs to the fucoxanthin chlorophyll protein family. As to quaternary structure, the LHC complex of chromophytic algae is composed of fucoxanthin, chlorophyll A and C bound non-covalently by fucoxanthin chlorophyll proteins (FCPs). The ratio of the pigments in lhc; fucoxanthin: chlorophyll C: chlorophyll A is (0.6-1): (0.1-0.3): (1).

The protein localises to the plastid. It is found in the chloroplast thylakoid membrane. In terms of biological role, the light-harvesting complex (LHC) functions as a light receptor, it captures and delivers excitation energy to photosystems with which it is closely associated. In chromophytic algae, LHC is associated with photosystem II, energy being transferred from fucoxanthin and chlorophyll C to chlorophyll A and the photosynthetic reaction centers where it is used to synthesize ATP and reducing power. This Phaeodactylum tricornutum (Diatom) protein is Fucoxanthin-chlorophyll a-c binding protein F, chloroplastic (FCPF).